We begin with the raw amino-acid sequence, 29 residues long: Ceratotoxin-B (29 aa).

As to quaternary structure, homomer of four to six subunits.

It is found in the secreted. Female-specific peptides with potent activity against Gram-positive and Gram-negative bacteria. They have as well hemolytic activity. In Ceratitis capitata (Mediterranean fruit fly), this protein is Ceratotoxin-B (CTXB).